Reading from the N-terminus, the 213-residue chain is 3-demethoxyubiquinol 3-hydroxylase (213 aa).

Residues Glu-62, Glu-92, His-95, Glu-144, Glu-176, and His-179 each contribute to the Fe cation site.

The protein belongs to the COQ7 family. The cofactor is Fe cation.

It localises to the cell membrane. The enzyme catalyses a 5-methoxy-2-methyl-3-(all-trans-polyprenyl)benzene-1,4-diol + AH2 + O2 = a 3-demethylubiquinol + A + H2O. The protein operates within cofactor biosynthesis; ubiquinone biosynthesis. Its function is as follows. Catalyzes the hydroxylation of 2-nonaprenyl-3-methyl-6-methoxy-1,4-benzoquinol during ubiquinone biosynthesis. This chain is 3-demethoxyubiquinol 3-hydroxylase, found in Legionella pneumophila (strain Paris).